A 56-amino-acid polypeptide reads, in one-letter code: Small ribosomal subunit protein uS14 (56 aa).

4 residues coordinate Zn(2+): Cys21, Cys24, Cys39, and Cys42.

Belongs to the universal ribosomal protein uS14 family. Zn(2+) is required as a cofactor.

The polypeptide is Small ribosomal subunit protein uS14 (RPS29) (Triticum aestivum (Wheat)).